The chain runs to 669 residues: DNA ligase (669 aa).

Residue 35–39 (DFEYD) coordinates NAD(+). Residues 52–71 (YPEWDSPDSPTHRVGSDKTE) form a disordered region. Residues 61-71 (PTHRVGSDKTE) show a composition bias toward basic and acidic residues. NAD(+) is bound by residues 84–85 (SL) and Glu-115. Lys-117 functions as the N6-AMP-lysine intermediate in the catalytic mechanism. Residues Arg-138, Glu-175, Lys-290, and Lys-314 each coordinate NAD(+). Cys-408, Cys-411, Cys-426, and Cys-432 together coordinate Zn(2+). In terms of domain architecture, BRCT spans 590-669 (AVSNRLAGKT…EEEFLRLIEE (80 aa)).

It belongs to the NAD-dependent DNA ligase family. LigA subfamily. It depends on Mg(2+) as a cofactor. Requires Mn(2+) as cofactor.

It carries out the reaction NAD(+) + (deoxyribonucleotide)n-3'-hydroxyl + 5'-phospho-(deoxyribonucleotide)m = (deoxyribonucleotide)n+m + AMP + beta-nicotinamide D-nucleotide.. Its function is as follows. DNA ligase that catalyzes the formation of phosphodiester linkages between 5'-phosphoryl and 3'-hydroxyl groups in double-stranded DNA using NAD as a coenzyme and as the energy source for the reaction. It is essential for DNA replication and repair of damaged DNA. The chain is DNA ligase from Porphyromonas gingivalis (strain ATCC BAA-308 / W83).